Here is a 104-residue protein sequence, read N- to C-terminus: Enhancer of rudimentary homolog 1 (104 aa).

This sequence belongs to the E(R) family. In terms of assembly, homodimer. Component of the erh1-mmi1 complex. Interacts with mmi1 (via N-terminus) in a 2:2 stoichiometry.

The protein resides in the nucleus. It is found in the cytoplasm. In terms of biological role, forms part of the erh1-mmi1 complex that recruits the CCR4-NOT complex and the NURS complex to target RNAs. Suppresses the meiotic program during vegetative growth and promotes the meiotic program during mating. Recruitment of the NURS complex to target mRNAs promotes mRNA decay by engagement of the nuclear exosome, and formation of heterochromatin islands at meiotic genes silenced by the exosome. Recruitment of the CCR4-NOT complex to target RNAs promotes heterochromatin formation at RNAi-dependent heterochromatin domains (HOODs), including a subset of meiotic genes, lncRNAs and retrotransposons. Recruitment of the CCR4-NOT complex to rDNA promotes rDNA heterochromatin assembly. The polypeptide is Enhancer of rudimentary homolog 1 (Schizosaccharomyces pombe (strain 972 / ATCC 24843) (Fission yeast)).